A 171-amino-acid chain; its full sequence is Phosphopantetheine adenylyltransferase (171 aa).

A substrate-binding site is contributed by Thr-10. Residues 10 to 11 (TF) and His-18 each bind ATP. Substrate is bound by residues Lys-42, Thr-74, and Arg-88. ATP-binding positions include 89–91 (GLR), Glu-99, and 124–130 (WACLSSK).

The protein belongs to the bacterial CoaD family. Homohexamer. The cofactor is Mg(2+).

The protein resides in the cytoplasm. The enzyme catalyses (R)-4'-phosphopantetheine + ATP + H(+) = 3'-dephospho-CoA + diphosphate. The protein operates within cofactor biosynthesis; coenzyme A biosynthesis; CoA from (R)-pantothenate: step 4/5. In terms of biological role, reversibly transfers an adenylyl group from ATP to 4'-phosphopantetheine, yielding dephospho-CoA (dPCoA) and pyrophosphate. This is Phosphopantetheine adenylyltransferase from Blochmanniella pennsylvanica (strain BPEN).